Reading from the N-terminus, the 872-residue chain is Alanine--tRNA ligase (872 aa).

4 residues coordinate Zn(2+): His571, His575, Cys674, and His678.

The protein belongs to the class-II aminoacyl-tRNA synthetase family. The cofactor is Zn(2+).

Its subcellular location is the cytoplasm. It carries out the reaction tRNA(Ala) + L-alanine + ATP = L-alanyl-tRNA(Ala) + AMP + diphosphate. Its function is as follows. Catalyzes the attachment of alanine to tRNA(Ala) in a two-step reaction: alanine is first activated by ATP to form Ala-AMP and then transferred to the acceptor end of tRNA(Ala). Also edits incorrectly charged Ser-tRNA(Ala) and Gly-tRNA(Ala) via its editing domain. The sequence is that of Alanine--tRNA ligase from Symbiobacterium thermophilum (strain DSM 24528 / JCM 14929 / IAM 14863 / T).